The sequence spans 217 residues: ATP synthase subunit a (217 aa).

Transmembrane regions (helical) follow at residues 5-25 (EHVI…LAAG), 63-83 (LIAS…LPFV), 89-109 (NINT…FEGF), 120-140 (FMGP…MSHL), 157-177 (GAIL…TLAV), and 191-213 (LAIV…GAVV).

It belongs to the ATPase A chain family. In terms of assembly, F-type ATPases have 2 components, CF(1) - the catalytic core - and CF(0) - the membrane proton channel. CF(1) has five subunits: alpha(3), beta(3), gamma(1), delta(1), epsilon(1). CF(0) has three main subunits: a(1), b(2) and c(9-12). The alpha and beta chains form an alternating ring which encloses part of the gamma chain. CF(1) is attached to CF(0) by a central stalk formed by the gamma and epsilon chains, while a peripheral stalk is formed by the delta and b chains.

The protein localises to the cell inner membrane. Key component of the proton channel; it plays a direct role in the translocation of protons across the membrane. The chain is ATP synthase subunit a from Hydrogenobaculum sp. (strain Y04AAS1).